Here is a 515-residue protein sequence, read N- to C-terminus: Maturase K (515 aa).

The protein belongs to the intron maturase 2 family. MatK subfamily.

The protein resides in the plastid. The protein localises to the chloroplast. Functionally, usually encoded in the trnK tRNA gene intron. Probably assists in splicing its own and other chloroplast group II introns. This is Maturase K from Ceratophyllum demersum (Rigid hornwort).